A 501-amino-acid polypeptide reads, in one-letter code: uncharacterized protein (501 aa).

A helical transmembrane segment spans residues 26–46 (ILLLLLGLIVLVNIGINVATM). 2 disordered regions span residues 316-384 (RGTE…VRRR) and 409-501 (EASH…EKLN). The segment covering 476-490 (RSSSLPPASTSTLRP) has biased composition (low complexity).

The protein resides in the membrane. This is an uncharacterized protein from Homo sapiens (Human).